The sequence spans 241 residues: uncharacterized protein (241 aa).

7 helical membrane passes run 12–32, 39–59, 89–109, 117–137, 152–172, 180–200, and 215–235; these read ITEI…LLLL, LLWL…EMKF, VYDV…ICYT, YYTF…NCVV, LFEY…ATML, IHFY…WFVY, and YVEA…SPLI.

It belongs to the mimivirus L68/R809 family.

It localises to the membrane. This is an uncharacterized protein from Acanthamoeba polyphaga mimivirus (APMV).